The primary structure comprises 98 residues: Co-chaperonin GroES (98 aa).

The protein belongs to the GroES chaperonin family. As to quaternary structure, heptamer of 7 subunits arranged in a ring. Interacts with the chaperonin GroEL.

It localises to the cytoplasm. In terms of biological role, together with the chaperonin GroEL, plays an essential role in assisting protein folding. The GroEL-GroES system forms a nano-cage that allows encapsulation of the non-native substrate proteins and provides a physical environment optimized to promote and accelerate protein folding. GroES binds to the apical surface of the GroEL ring, thereby capping the opening of the GroEL channel. This Bartonella quintana (strain Toulouse) (Rochalimaea quintana) protein is Co-chaperonin GroES.